Consider the following 327-residue polypeptide: uncharacterized protein (327 aa).

The first 24 residues, 1–24 (MAMACLCLANISWATVCANSTGVA), serve as a signal peptide directing secretion.

The protein belongs to the fimbrial protein family.

It localises to the fimbrium. In terms of biological role, part of the sfmACDHF fimbrial operon. Could contribute to adhesion to various surfaces in specific environmental niches. Increases adhesion to eukaryotic T24 bladder epithelial cells in the absence of fim genes. This is an uncharacterized protein from Escherichia coli (strain K12).